The following is an 85-amino-acid chain: Large ribosomal subunit protein bL27 (85 aa).

The tract at residues 1–21 is disordered; sequence MAHKKGVGSTRNGRDSDGQRL.

This sequence belongs to the bacterial ribosomal protein bL27 family.

This Geotalea uraniireducens (strain Rf4) (Geobacter uraniireducens) protein is Large ribosomal subunit protein bL27.